Reading from the N-terminus, the 307-residue chain is D-alanine--D-alanine ligase (307 aa).

The ATP-grasp domain maps to 105-304; it reads KMLWKGFGLP…FEQLVVKILE (200 aa). 135–190 is a binding site for ATP; the sequence is VERLGLPLMVKPSREGSSVGLTKVNAVEELKNAVDLALTHDDTVLIEEWLSGIEMT. Mg(2+) contacts are provided by Asp-258, Glu-271, and Asn-273.

Belongs to the D-alanine--D-alanine ligase family. Mg(2+) is required as a cofactor. Requires Mn(2+) as cofactor.

It localises to the cytoplasm. The enzyme catalyses 2 D-alanine + ATP = D-alanyl-D-alanine + ADP + phosphate + H(+). Its pathway is cell wall biogenesis; peptidoglycan biosynthesis. Its function is as follows. Cell wall formation. This is D-alanine--D-alanine ligase from Mannheimia succiniciproducens (strain KCTC 0769BP / MBEL55E).